A 493-amino-acid chain; its full sequence is Transmembrane protein 184 homolog DDB_G0284525 (493 aa).

A compositionally biased stretch (polar residues) spans 1–10 (MTQESSSSNH). A disordered region spans residues 1 to 25 (MTQESSSSNHYVDESSFDNNNNNNN). 7 helical membrane-spanning segments follow: residues 46–66 (VPALYAMFALASLFVLLATIL), 87–107 (IVRIVFMIPIYAIYSLLSLLL), 119–139 (DCYEAYVLYMFFALCVSYGGG), 180–200 (YVLVRPAVTLASAIFEIFGLY), 212–232 (FYNAFIINVSVTVALYIVVLF), 254–274 (IVVFFCFWQSIAISGMTNFGW), and 293–313 (FLICFEMFGVAILHQYAFPYE). Asn415 and Asn416 each carry an N-linked (GlcNAc...) asparagine glycan.

Belongs to the TMEM184 family.

The protein localises to the cell membrane. In terms of biological role, probable transporter. This chain is Transmembrane protein 184 homolog DDB_G0284525 (tmem184A), found in Dictyostelium discoideum (Social amoeba).